The primary structure comprises 437 residues: Exosome complex component RRP45 (437 aa).

At Ser65 the chain carries Phosphoserine. Lys297 is subject to N6-acetyllysine; alternate. Residue Lys297 forms a Glycyl lysine isopeptide (Lys-Gly) (interchain with G-Cter in SUMO1); alternate linkage. Lys297 participates in a covalent cross-link: Glycyl lysine isopeptide (Lys-Gly) (interchain with G-Cter in SUMO2); alternate. A phosphoserine mark is found at Ser306 and Ser346. The segment at Ile339–Asn437 is disordered. The segment covering Asp349–Ile363 has biased composition (acidic residues). Phosphoserine occurs at positions 392, 394, and 407. A compositionally biased stretch (polar residues) spans Ala413–Ser425. Residues Gln426–Asn437 are compositionally biased toward basic residues.

It belongs to the RNase PH family. As to quaternary structure, component of the RNA exosome core complex (Exo-9), composed of EXOSC1, EXOSC2, EXOSC3, EXOSC4, EXOSC5, EXOSC6, EXOSC7, EXOSC8 and EXOSC9; within the complex interacts with EXOSC3, EXOSC4, EXOSC5 and DIS3. The catalytically inactive RNA exosome core complex (Exo-9) associates with the catalytic subunit EXOSC10/RRP6. Exo-9 may associate with DIS3 to form the nucleolar exosome complex, or DIS3L to form the cytoplasmic exosome complex. Exo-9 is formed by a hexameric base ring consisting of the heterodimers EXOSC4-EXOSC9, EXOSC5-EXOSC8 and EXOSC6-EXOSC7, and a cap ring consisting of EXOSC1, EXOSC2 and EXOSC3. The RNA exosome complex associates with cofactors C1D/RRP47, MPHOSPH6/MPP6 and MTREX/MTR4. Interacts (via C-terminus region) with SETX (via N-terminus domain); the interaction enhances SETX sumoylation. Interacts with DIS3; the interaction is direct.

Its subcellular location is the cytoplasm. It localises to the nucleus. It is found in the nucleolus. The protein localises to the nucleoplasm. Functionally, non-catalytic component of the RNA exosome complex which has 3'-&gt;5' exoribonuclease activity and participates in a multitude of cellular RNA processing and degradation events. In the nucleus, the RNA exosome complex is involved in proper maturation of stable RNA species such as rRNA, snRNA and snoRNA, in the elimination of RNA processing by-products and non-coding 'pervasive' transcripts, such as antisense RNA species and promoter-upstream transcripts (PROMPTs), and of mRNAs with processing defects, thereby limiting or excluding their export to the cytoplasm. The RNA exosome may be involved in Ig class switch recombination (CSR) and/or Ig variable region somatic hypermutation (SHM) by targeting AICDA deamination activity to transcribed dsDNA substrates. In the cytoplasm, the RNA exosome complex is involved in general mRNA turnover and specifically degrades inherently unstable mRNAs containing AU-rich elements (AREs) within their 3' untranslated regions, and in RNA surveillance pathways, preventing translation of aberrant mRNAs. It seems to be involved in degradation of histone mRNA. The catalytic inactive RNA exosome core complex of 9 subunits (Exo-9) is proposed to play a pivotal role in the binding and presentation of RNA for ribonucleolysis, and to serve as a scaffold for the association with catalytic subunits and accessory proteins or complexes. EXOSC9 binds to ARE-containing RNAs. This is Exosome complex component RRP45 (Exosc9) from Rattus norvegicus (Rat).